The chain runs to 84 residues: Small ribosomal subunit protein bS20 (84 aa).

The protein belongs to the bacterial ribosomal protein bS20 family.

Functionally, binds directly to 16S ribosomal RNA. The sequence is that of Small ribosomal subunit protein bS20 from Porphyromonas gingivalis (strain ATCC 33277 / DSM 20709 / CIP 103683 / JCM 12257 / NCTC 11834 / 2561).